The chain runs to 374 residues: Type IV secretion system protein PtlG (374 aa).

A helical transmembrane segment spans residues 38-56 (WMFALVAVALSCLLATGIW). A disordered region spans residues 86 to 117 (HPREPEPAPLPDMPAAPDPILPQPRPAPPVPP). Pro residues predominate over residues 92 to 117 (PAPLPDMPAAPDPILPQPRPAPPVPP).

It belongs to the TrbI/VirB10 family.

The protein localises to the cell membrane. Functionally, component of the type IV secretion system ptl required for secretion of assembled pertussis toxin (PTX) through the outer membrane. The protein is Type IV secretion system protein PtlG (ptlG) of Bordetella pertussis (strain Tohama I / ATCC BAA-589 / NCTC 13251).